The sequence spans 424 residues: Serine hydroxymethyltransferase (424 aa).

(6S)-5,6,7,8-tetrahydrofolate-binding positions include Leu-113 and 117–119 (GHL). Lys-222 bears the N6-(pyridoxal phosphate)lysine mark. Position 361–363 (361–363 (SPF)) interacts with (6S)-5,6,7,8-tetrahydrofolate.

This sequence belongs to the SHMT family. As to quaternary structure, homodimer. The cofactor is pyridoxal 5'-phosphate.

It is found in the cytoplasm. The enzyme catalyses (6R)-5,10-methylene-5,6,7,8-tetrahydrofolate + glycine + H2O = (6S)-5,6,7,8-tetrahydrofolate + L-serine. It functions in the pathway one-carbon metabolism; tetrahydrofolate interconversion. Its pathway is amino-acid biosynthesis; glycine biosynthesis; glycine from L-serine: step 1/1. In terms of biological role, catalyzes the reversible interconversion of serine and glycine with tetrahydrofolate (THF) serving as the one-carbon carrier. This reaction serves as the major source of one-carbon groups required for the biosynthesis of purines, thymidylate, methionine, and other important biomolecules. Also exhibits THF-independent aldolase activity toward beta-hydroxyamino acids, producing glycine and aldehydes, via a retro-aldol mechanism. The protein is Serine hydroxymethyltransferase of Flavobacterium johnsoniae (strain ATCC 17061 / DSM 2064 / JCM 8514 / BCRC 14874 / CCUG 350202 / NBRC 14942 / NCIMB 11054 / UW101) (Cytophaga johnsonae).